The following is a 251-amino-acid chain: Flap endonuclease Xni (251 aa).

Asp104 is a Mg(2+) binding site. Residues 160–249 (VLPQQLPDYW…IDGNLQQLRL (90 aa)) form the 5'-3' exonuclease domain. K(+)-binding residues include Leu171, Ala172, Pro180, Val182, and Ile185. The interval 184-189 (GIGPKS) is interaction with DNA.

The protein belongs to the Xni family. Requires Mg(2+) as cofactor. K(+) serves as cofactor.

Functionally, has flap endonuclease activity. During DNA replication, flap endonucleases cleave the 5'-overhanging flap structure that is generated by displacement synthesis when DNA polymerase encounters the 5'-end of a downstream Okazaki fragment. The chain is Flap endonuclease Xni from Citrobacter koseri (strain ATCC BAA-895 / CDC 4225-83 / SGSC4696).